A 715-amino-acid polypeptide reads, in one-letter code: MLPEEDLKIIRKELGREPTLVEQGCFLNLWSEHCSYRSSAPLLKTFTSTGENVLIGPGDDAAIIKFEDGYVLAIGMESHNHPSYVDPYNGAATGIGGIVRDIISMGARPIALMDPLYFGPLDTPKNLFLFEQIIKGIAGYGNCIGVPVVNGETFFDRRYSGNPLVNVVAVGLCKEENVTTSRSQKAENKLILAGSSTGKDGLGGASFASRDLSESAEAEDRPSVQVGDPYTEKLVMEMTLEAIEKGYVKSCKDLGAAGLGGASSELAAKGGLGARIIADAVPQREPNMNAYEILLAESQERMLFEVAPEDVDAVLALVQKYDLNGAVVGYLTKEPTYTVEFGGEIVADIPIAFLTGGAPTCEKPSEAPTLREEGKKPETPEDLKVAFLKVLSSYNIASKEWIYRQYDHEVQLRTVVKPGEDSGVLRITGTKGIALTCGCQPRATLLDPYNGGKTAIIENSMNLAVKGAEPLAIVNCLNFGNPERPETYWQFENAVLGLGDEARKLSIPVVGGNVSLYNESDEFKTAIPPTPSIGMIGKVDLEIPLPSGFFAKDGDSIILVGETTPEMGGSEYYACMDSGNAGMVPAVPENAPELIKAIIEAVKSGKLSSAHDLSLGGIGAGLARMCRSMGAKVDLSELAGETQADELLFSEAPARALLAISEPEAVREILKDVPHAVIGKVGGETLEIKGKNFELSVSLKEIAEAYGSLTRFMMG.

Histidine 33 is an active-site residue. Tyrosine 36 serves as a coordination point for ATP. Glutamate 77 provides a ligand contact to Mg(2+). Residues 78–81 and arginine 100 each bind substrate; that span reads SHNH. The Proton acceptor role is filled by histidine 79. Aspartate 101 is a Mg(2+) binding site. Position 225 (glutamine 225) interacts with substrate. Position 253 (aspartate 253) interacts with Mg(2+). Residue 297–299 coordinates substrate; sequence ESQ. The ATP site is built by asparagine 475 and glycine 512. A Mg(2+)-binding site is contributed by asparagine 513. Serine 515 provides a ligand contact to substrate.

The protein belongs to the FGAMS family. As to quaternary structure, monomer. Part of the FGAM synthase complex composed of 1 PurL, 1 PurQ and 2 PurS subunits.

The protein resides in the cytoplasm. It catalyses the reaction N(2)-formyl-N(1)-(5-phospho-beta-D-ribosyl)glycinamide + L-glutamine + ATP + H2O = 2-formamido-N(1)-(5-O-phospho-beta-D-ribosyl)acetamidine + L-glutamate + ADP + phosphate + H(+). It participates in purine metabolism; IMP biosynthesis via de novo pathway; 5-amino-1-(5-phospho-D-ribosyl)imidazole from N(2)-formyl-N(1)-(5-phospho-D-ribosyl)glycinamide: step 1/2. Functionally, part of the phosphoribosylformylglycinamidine synthase complex involved in the purines biosynthetic pathway. Catalyzes the ATP-dependent conversion of formylglycinamide ribonucleotide (FGAR) and glutamine to yield formylglycinamidine ribonucleotide (FGAM) and glutamate. The FGAM synthase complex is composed of three subunits. PurQ produces an ammonia molecule by converting glutamine to glutamate. PurL transfers the ammonia molecule to FGAR to form FGAM in an ATP-dependent manner. PurS interacts with PurQ and PurL and is thought to assist in the transfer of the ammonia molecule from PurQ to PurL. The protein is Phosphoribosylformylglycinamidine synthase subunit PurL of Methanosarcina acetivorans (strain ATCC 35395 / DSM 2834 / JCM 12185 / C2A).